The chain runs to 82 residues: uncharacterized protein (82 aa).

Positions 1 to 11 (MKARGSRENAS) are enriched in basic and acidic residues. The tract at residues 1-25 (MKARGSRENASKRRPSQTQYDTHLR) is disordered. A compositionally biased stretch (polar residues) spans 16 to 25 (SQTQYDTHLR).

This is an uncharacterized protein from Human cytomegalovirus (strain AD169) (HHV-5).